We begin with the raw amino-acid sequence, 555 residues long: Glucose-6-phosphate isomerase (555 aa).

The Proton donor role is filled by E365. Catalysis depends on residues H396 and K522.

It belongs to the GPI family.

The protein localises to the cytoplasm. It catalyses the reaction alpha-D-glucose 6-phosphate = beta-D-fructose 6-phosphate. The protein operates within carbohydrate biosynthesis; gluconeogenesis. It participates in carbohydrate degradation; glycolysis; D-glyceraldehyde 3-phosphate and glycerone phosphate from D-glucose: step 2/4. Functionally, catalyzes the reversible isomerization of glucose-6-phosphate to fructose-6-phosphate. The chain is Glucose-6-phosphate isomerase from Psychrobacter arcticus (strain DSM 17307 / VKM B-2377 / 273-4).